An 810-amino-acid chain; its full sequence is Venom phosphodiesterase 2 (810 aa).

The first 23 residues, 1 to 23, serve as a signal peptide directing secretion; that stretch reads MIQQKVLFISLVAVTLGLGLGLG. The SMB domain occupies 33–77; that stretch reads QSWSCSKLRCGEKRIANVLCSCSDDCLEKKDCCTDYKSICKGETS. Disulfide bonds link C37-C42, C37-C54, C42-C72, C52-C54, C52-C65, C58-C64, C65-C72, C83-C129, and C91-C303. Residues D106 and T144 each coordinate a divalent metal cation. T144 serves as the catalytic AMP-threonine intermediate. N-linked (GlcNAc...) asparagine glycosylation is found at N175, N218, and N229. AMP is bound at residue K230. 4 residues coordinate a divalent metal cation: D264, H268, D311, and H312. AMP is bound at residue H268. 6 disulfide bridges follow: C319–C416, C367–C752, C500–C558, C513–C613, C515–C598, and C721–C731. Residue N364 is glycosylated (N-linked (GlcNAc...) asparagine). H421 serves as a coordination point for a divalent metal cation. N-linked (GlcNAc...) asparagine glycans are attached at residues N471, N553, N633, and N704.

Belongs to the nucleotide pyrophosphatase/phosphodiesterase family. In terms of assembly, monomer cleaved in two subunits; disulfide-linked. Is synthesized as a single-chain protein and is subsequently cleaved to form a two-subunit protein held together with disulfide bonds. A divalent metal cation is required as a cofactor. As to expression, expressed by venom gland.

The protein localises to the secreted. The enzyme catalyses ADP + H2O = AMP + phosphate + H(+). Hydrolyzes ADP with high activity. Shows weak or no activity on 5'-AMP, 5'-GMP, 3'-AMP, ATP, cAMP, and cGMP. Is devoid of monophosphatase and proteinase activities. Dose-dependently inhibits platelet aggregation induced by ADP (IC(50)=0.99 uM) and collagen (IC(50)=1.4 uM). The polypeptide is Venom phosphodiesterase 2 (Crotalus adamanteus (Eastern diamondback rattlesnake)).